We begin with the raw amino-acid sequence, 412 residues long: MNKHPWKNQLSEMVQPSGGPAEDQDMLGEESSLGKPAMLHLPSEQGTPETLQRCLEENQELRDAIRQSNQMLRERCEELLHFQVSQREEKEFLMCKFQEARKLVERLSLEKLDLRSQREQALKELEQLKKCQQQMAEDKASVKAQVTSLLGELQESQSRLEAATKDRQALEGRIRAVSEQVRQLESEREVLQQQHSVQVDQLRMQNQSVEAALRMERQAASEEKRKLAQLQAAYHQLFQDYDSHIKSSKGMQLEDLRQQLQQAEEALVAKQELIDKLKEEAEQHKIVMETVPVLKAQADIYKADFQAERHAREKLVEKKEYLQEQLEQLQREFNKLKVGCHESARIEDMRKRHVETPQPPLLPAPAHHSFHLALSNQRRSPPEEPPDFCCPKCQYQAPDMDTLQIHVMECIE.

The segment at 1–48 is disordered; that stretch reads MNKHPWKNQLSEMVQPSGGPAEDQDMLGEESSLGKPAMLHLPSEQGTP. Residues 1–197 form a required for interaction with and ubiquitination by MARCHF2 region; it reads MNKHPWKNQL…REVLQQQHSV (197 aa). Phosphoserine; by IKKB occurs at positions 31 and 43. Positions 44 to 111 are interaction with CHUK/IKBKB; that stretch reads EQGTPETLQR…KLVERLSLEK (68 aa). A coiled-coil region spans residues 49-345; the sequence is ETLQRCLEEN…LKVGCHESAR (297 aa). Ser68 carries the phosphoserine modification. Phosphoserine; by ATM is present on Ser85. Glycyl lysine isopeptide (Lys-Gly) (interchain with G-Cter in ubiquitin) cross-links involve residues Lys111, Lys139, Lys143, Lys226, and Lys246. Residues 150–250 are interaction with TANK; sequence LGELQESQSR…YDSHIKSSKG (101 aa). The ubiquitin-binding (UBAN) stretch occupies residues 242 to 343; it reads DSHIKSSKGM…NKLKVGCHES (102 aa). The self-association stretch occupies residues 246–358; that stretch reads KSSKGMQLED…MRKRHVETPQ (113 aa). The required for interaction with TNFAIP3 stretch occupies residues 249–412; that stretch reads KGMQLEDLRQ…LQIHVMECIE (164 aa). The linear polyubiquitin-binding, does not bind to 'Lys-63'-linked polyubiquitin stretch occupies residues 250–339; sequence GMQLEDLRQQ…QREFNKLKVG (90 aa). Lys270 participates in a covalent cross-link: Glycyl lysine isopeptide (Lys-Gly) (interchain with G-Cter in SUMO); alternate. A Glycyl lysine isopeptide (Lys-Gly) (interchain with G-Cter in ubiquitin); alternate cross-link involves residue Lys270. Glycyl lysine isopeptide (Lys-Gly) (interchain with G-Cter in ubiquitin) cross-links involve residues Lys276, Lys278, Lys285, and Lys295. Lys302 is covalently cross-linked (Glycyl lysine isopeptide (Lys-Gly) (interchain with G-Cter in SUMO); alternate). Residue Lys302 forms a Glycyl lysine isopeptide (Lys-Gly) (interchain with G-Cter in ubiquitin); alternate linkage. Residues Lys314, Lys318, and Lys319 each participate in a glycyl lysine isopeptide (Lys-Gly) (interchain with G-Cter in ubiquitin) cross-link. Residues 315–336 are leucine-zipper; that stretch reads LVEKKEYLQEQLEQLQREFNKL. At Ser369 the chain carries Phosphoserine; by IKKB. Residues 375-412 form an interaction with CYLD region; that stretch reads SNQRRSPPEEPPDFCCPKCQYQAPDMDTLQIHVMECIE. Position 380 is a phosphoserine (Ser380). The CCHC NOA-type zinc-finger motif lies at 382–412; it reads PEEPPDFCCPKCQYQAPDMDTLQIHVMECIE. Position 390 (Cys390) interacts with Zn(2+). Lys392 participates in a covalent cross-link: Glycyl lysine isopeptide (Lys-Gly) (interchain with G-Cter in ubiquitin). Residues Cys393, His406, and Cys410 each contribute to the Zn(2+) site.

Homodimer; disulfide-linked. Component of the I-kappa-B-kinase (IKK) core complex consisting of CHUK, IKBKB and IKBKG; probably four alpha/CHUK-beta/IKBKB dimers are associated with four gamma/IKBKG subunits. The IKK core complex seems to associate with regulatory or adapter proteins to form a IKK-signalosome holo-complex. The IKK complex associates with TERF2IP/RAP1, leading to promote IKK-mediated phosphorylation of RELA/p65. Part of a complex composed of NCOA2, NCOA3, CHUK/IKKA, IKBKB, IKBKG and CREBBP. Interacts with COPS3, CYLD, NALP2, TRPC4AP and PIDD1. Interacts with ATM; the complex is exported from the nucleus. Interacts with TRAF6. Interacts with IKBKE. Interacts with TANK; the interaction is enhanced by IKBKE and TBK1. Part of a ternary complex consisting of TANK, IKBKB and IKBKG. Interacts with ZFAND5. Interacts with RIPK2. Interacts with TNIP1 and TNFAIP3; TNIP1 facilitates the TNFAIP3-mediated de-ubiquitination of IKBKG. Interacts with TNFAIP3; the interaction is induced by TNF stimulation and by polyubiquitin. Binds (via UBAN region) polyubiquitin; binds both 'Lys-63'-linked and linear polyubiquitin, with higher affinity for linear ubiquitin. Interacts with NLRP10. Interacts with TANK; this interaction increases in response to DNA damage. Interacts with USP10; this interaction increases in response to DNA damage. Interacts with ZC3H12A; this interaction increases in response to DNA damage. Interacts with IFIT5; the interaction synergizes the recruitment of IKK to MAP3K7 and enhances IKK phosphorylation. Interacts with TRIM29; this interaction induces IKBKG/NEMO ubiquitination and proteolytic degradation. Interacts with TRIM13; this interaction leads to IKBKG/NEMO ubiquitination. Interacts with ARFIP2. Interacts with RIPK1. Interacts with (ubiquitinated) BCL10; interaction with polyubiquitinated BCL10 via both 'Lys-63'-linked and linear ubiquitin is required for TCR-induced NF-kappa-B activation. Interacts with MARCHF2; during the late stages of macrophage viral and bacterial infection; the interaction leads to ubiquitination and degradation of IKBKG/NEMO. Phosphorylation at Ser-68 attenuates aminoterminal homodimerization. In terms of processing, polyubiquitinated on Lys-278 via 'Lys-63'-linked ubiquitin; the ubiquitination is mediated downstream of NOD2 and RIPK2 and probably plays a role in signaling by facilitating interactions with ubiquitin domain-containing proteins and activates the NF-kappa-B pathway. Polyubiquitinated on Lys-278 and Lys-302 through 'Lys-63'-linked ubiquitin; the ubiquitination is mediated by BCL10, MALT1 and TRAF6 and probably plays a role in signaling by facilitating interactions with ubiquitin domain-containing proteins and activates the NF-kappa-B pathway. Monoubiquitinated on Lys-270 and Lys-302; promotes nuclear export. Polyubiquitinated through 'Lys-27' by TRIM23; involved in antiviral innate and inflammatory responses. Linear polyubiquitinated on Lys-111, Lys-143, Lys-226, Lys-246, Lys-270, Lys-278, Lys-285, Lys-295, Lys-302 and Lys-319; the head-to-tail polyubiquitination is mediated by the LUBAC complex and plays a key role in NF-kappa-B activation. Deubiquitinated by USP10 in a TANK-dependent and -independent manner, leading to the negative regulation of NF-kappa-B signaling upon DNA damage. Ubiquitinated at Lys-319 by MARCHF2 following bacterial and viral infection which leads to its degradation. Polyubiquitinated via 'Lys-29'-linked ubiquitin; leading to lysosomal degradation. Post-translationally, sumoylated on Lys-270 and Lys-302 with SUMO1; the modification results in phosphorylation of Ser-85 by ATM leading to a replacement of the sumoylation by mono-ubiquitination on these residues. Neddylated by TRIM40, resulting in stabilization of NFKBIA and down-regulation of NF-kappa-B activity.

It localises to the cytoplasm. It is found in the nucleus. Functionally, regulatory subunit of the IKK core complex which phosphorylates inhibitors of NF-kappa-B thus leading to the dissociation of the inhibitor/NF-kappa-B complex and ultimately the degradation of the inhibitor. Its binding to scaffolding polyubiquitin plays a key role in IKK activation by multiple signaling receptor pathways. Can recognize and bind both 'Lys-63'-linked and linear polyubiquitin upon cell stimulation, with a much highr affinity for linear polyubiquitin. Could be implicated in NF-kappa-B-mediated protection from cytokine toxicity. Essential for viral activation of IRF3. Involved in TLR3- and IFIH1-mediated antiviral innate response; this function requires 'Lys-27'-linked polyubiquitination. The polypeptide is NF-kappa-B essential modulator (Ikbkg) (Mus musculus (Mouse)).